We begin with the raw amino-acid sequence, 169 residues long: Large ribosomal subunit protein uL15 (169 aa).

The disordered stretch occupies residues glycine 20 to leucine 56. The segment covering arginine 21–valine 35 has biased composition (gly residues).

The protein belongs to the universal ribosomal protein uL15 family. As to quaternary structure, part of the 50S ribosomal subunit.

Its function is as follows. Binds to the 23S rRNA. This Methylorubrum extorquens (strain CM4 / NCIMB 13688) (Methylobacterium extorquens) protein is Large ribosomal subunit protein uL15.